The sequence spans 276 residues: Chymotrypsin (276 aa).

A signal peptide spans 1–16 (MKVALVVLALFGVSLA). The propeptide at 17–45 (ASIDNIEIPPSKNIYVEPINQPEVDPSLE) is activation peptide. One can recognise a Peptidase S1 domain in the interval 46-272 (IVNGQEVVPH…YLNWLQTHSE (227 aa)). Cys74 and Cys90 are disulfide-bonded. Catalysis depends on charge relay system residues His89 and Asp135. N-linked (GlcNAc...) asparagine glycans are attached at residues Asn144 and Asn193. Intrachain disulfides connect Cys202–Cys215 and Cys225–Cys250. Catalysis depends on Ser229, which acts as the Charge relay system.

The protein belongs to the peptidase S1 family. As to expression, expressed in larval carcasses and gut, and adult gut.

It is found in the secreted. Its subcellular location is the extracellular space. The catalysed reaction is Preferential cleavage: Tyr-|-Xaa, Trp-|-Xaa, Phe-|-Xaa, Leu-|-Xaa.. Its function is as follows. Serine protease with chymotryptic and collagenolytic activities. The sequence is that of Chymotrypsin from Phaedon cochleariae (Mustard beetle).